Here is a 360-residue protein sequence, read N- to C-terminus: MKAIIVLLMVVTSNADRICTGITSSNSPHVVKTATQGEVNVTGVIPLTTTPTKSHFANLKGTKTRGKLCPNCLNCTDLDVALARPMCIGTIPSAKASILHEVRPVTSGCFPIMHDRTKIRQLPNLLRGYENIRLSTHNVINAERAPGGPYRLGTSGSCPNVTSRSGFFATMAWAVPRDNKTATNPLTVEVPYICTKGEDQITVWGFHSDNKTQMKNLYGDSNPQKFTSSANGVTTHYVSQIGGFPNQTEDGGLPQSGRIVVDYMVQKPGKTGTIVYQRGVLLPQKVWCASGRSKVIKGSLPLIGEADCLHEKYGGLNKSKPYYTGEHAKAIGNCPIWVKTPLKLANGTKYRPPAKLLKER.

An N-terminal signal peptide occupies residues 1 to 15; the sequence is MKAIIVLLMVVTSNA. N-linked (GlcNAc...) asparagine; by host glycans are attached at residues asparagine 40, asparagine 74, asparagine 160, asparagine 179, asparagine 210, asparagine 246, asparagine 317, and asparagine 346.

This sequence belongs to the influenza viruses hemagglutinin family. Homotrimer of disulfide-linked HA1-HA2. Post-translationally, in natural infection, inactive HA is matured into HA1 and HA2 outside the cell by one or more trypsin-like, arginine-specific endoprotease secreted by the bronchial epithelial cells. One identified protease that may be involved in this process is secreted in lungs by club cells. Palmitoylated.

Its subcellular location is the virion membrane. It localises to the host apical cell membrane. Functionally, binds to sialic acid-containing receptors on the cell surface, bringing about the attachment of the virus particle to the cell. Plays a major role in the determination of host range restriction and virulence. Class I viral fusion protein. Responsible for penetration of the virus into the cell cytoplasm by mediating the fusion of the membrane of the endocytosed virus particle with the endosomal membrane. Low pH in endosomes induce an irreversible conformational change in HA2, releasing the fusion hydrophobic peptide. Several trimers are required to form a competent fusion pore. In Influenza B virus (strain B/New York/3/1990), this protein is Hemagglutinin (HA).